Consider the following 1038-residue polypeptide: Fibronectin-binding protein A (1038 aa).

Residues 1-36 (MKNNLRYGIRKHKLGAASVFLGTMIVVGMGQDKEAA) form the signal peptide. Positions 7 to 18 (YGIRKHKLGAAS) match the YSIRK-G/S signaling motif motif. The interval 37–193 (ASEQKTTTVE…VSEVKGTDVT (157 aa)) is disordered. A ligand-binding A region region spans residues 37–507 (ASEQKTTTVE…SNKADGNGKN (471 aa)). Residues 39–92 (EQKTTTVEENGNSATDNKTSETQTTATNVNHIEETQSYNATVTEQPSNATQVTT) are compositionally biased toward polar residues. A compositionally biased stretch (basic and acidic residues) spans 112–121 (TVKEEEKPQV). A compositionally biased stretch (polar residues) spans 122 to 164 (KETTQPQDNSGNQRQVDLTPKKVTQNQGTETQVEVAQPRTASE). Over residues 174-189 (DVAEAKEASDVSEVKG) the composition is skewed to basic and acidic residues. Residues 189-507 (GTDVTSKVTV…SNKADGNGKN (319 aa)) are fibrinogen/elastin/tropoelastin-binding. The fibronectin-binding stretch occupies residues 508-868 (GQIIQDNDFE…EGQQTIEEDT (361 aa)). One copy of the B-1 repeat lies at 541-570 (ENQDNTPLDIDYHTAIDGEGGYVDGYIETI). Positions 541–600 (ENQDNTPLDIDYHTAIDGEGGYVDGYIETIEETDSSAIDIDYHTAVDSEVGHVGGYTESS) are 2 X approximate tandem repeats. Residues 571-600 (EETDSSAIDIDYHTAVDSEVGHVGGYTESS) form a B-2 repeat. 3 disordered regions span residues 736–804 (LGYE…GGNI), 825–976 (IEED…GKVV), and 989–1015 (VAPT…NKGM). A D-1 repeat occupies 741-778 (GQNSGNQSFEEDTEEDKPKYEQGGNIVDIDFDSVPQIH). Positions 741–898 (GQNSGNQSFE…TPEVPSEPET (158 aa)) are 4 X approximate tandem repeats. The stretch at 779 to 816 (GQNKGDQSFEEDTEKDKPKYEHGGNIIDIDFDSVPQIH) is one D-2 repeat. One copy of the D-3 repeat lies at 817-855 (GFNKHNEIIEEDTNKDKPNYQFGGHNSVDFEEDTLPKVS). Basic and acidic residues predominate over residues 825–834 (IEEDTNKDKP). One copy of the D-4 repeat lies at 856–898 (GQNEGQQTIEEDTTPPTPPTPEVPSEPETPMPPTPEVPSEPET). A compositionally biased stretch (pro residues) spans 870-958 (PPTPPTPEVP…PAEPGKPVPP (89 aa)). WR repeat units follow at residues 899-912 (PTPP…EPET), 913-926 (PTPP…EPET), 927-940 (PTPP…EPET), 941-954 (PTPP…EPGK), and 955-968 (PVPP…KPSK). The tract at residues 899–968 (PTPPTPEVPS…AKEEPKKPSK (70 aa)) is 5 X tandem repeats, Pro-rich (WR). An LPXTG sorting signal motif is present at residues 1002-1006 (LPETG). Threonine 1005 bears the Pentaglycyl murein peptidoglycan amidated threonine mark. A propeptide spans 1006-1038 (GGEESTNKGMLFGGLFSILGLALLRRNKKNNKA) (removed by sortase).

The protein resides in the secreted. Its subcellular location is the cell wall. Promotes bacterial attachment to multiple substrates, such as fibronectin (Fn), fibrinogen (Fg), elastin peptides and tropoelastin. This confers to S.aureus the ability to invade endothelial cells. Promotes adherence to and aggregation of activated platelets. This chain is Fibronectin-binding protein A (fnbA), found in Staphylococcus aureus (strain Mu50 / ATCC 700699).